The chain runs to 108 residues: MSYQQQQCKQPCQPPPVCPPPQCPEPCPPPKCPEPCPPPKCTEPCPPPKCPEPCPPPKCPEPCPPPKCPEPCPPPKCTEPCPPPSYQQKCPSVQPSPPCQQKCPPKNK.

A compositionally biased stretch (low complexity) spans 1–11 (MSYQQQQCKQP). The segment at 1–22 (MSYQQQQCKQPCQPPPVCPPPQ) is disordered. A compositionally biased stretch (pro residues) spans 12–22 (CQPPPVCPPPQ). 7 tandem repeats follow at residues 21 to 29 (PQCPEPCPP), 30 to 38 (PKCPEPCPP), 39 to 47 (PKCTEPCPP), 48 to 56 (PKCPEPCPP), 57 to 65 (PKCPEPCPP), 66 to 74 (PKCPEPCPP), and 75 to 83 (PKCTEPCPP). The tract at residues 21-83 (PQCPEPCPPP…PPKCTEPCPP (63 aa)) is 7 X 9 AA tandem repeats of P-[KQ]-C-[PT]-E-P-C-P-P. The interval 83–108 (PPSYQQKCPSVQPSPPCQQKCPPKNK) is disordered. The segment covering 87–108 (QQKCPSVQPSPPCQQKCPPKNK) has biased composition (low complexity).

Belongs to the cornifin (SPRR) family. In terms of tissue distribution, expressed weakly in uterus.

The protein resides in the cytoplasm. Cross-linked envelope protein of keratinocytes. It is a keratinocyte protein that first appears in the cell cytosol, but ultimately becomes cross-linked to membrane proteins by transglutaminase. All that results in the formation of an insoluble envelope beneath the plasma membrane. In Mus musculus (Mouse), this protein is Small proline-rich protein 2H (Sprr2h).